The sequence spans 323 residues: Small ribosomal subunit protein uS3 (323 aa).

The region spanning 17–86 is the KH type-2 domain; that stretch reads IDEFFADELG…DPQIDVQEVD (70 aa). The tract at residues 251–303 is disordered; it reads ADPGVSSEDEEVVTEPVDIGGDDEDVEDIEVVSDDSGNDTETVAEEVEELDAE. Acidic residues predominate over residues 270 to 303; it reads GGDDEDVEDIEVVSDDSGNDTETVAEEVEELDAE.

It belongs to the universal ribosomal protein uS3 family. In terms of assembly, part of the 30S ribosomal subunit.

Binds the lower part of the 30S subunit head. This is Small ribosomal subunit protein uS3 from Haloquadratum walsbyi (strain DSM 16790 / HBSQ001).